The following is a 439-amino-acid chain: Arginine biosynthesis bifunctional protein ArgJ, mitochondrial (439 aa).

Residues Thr175, Lys201, Thr212, Glu301, Asn434, and Ser439 each contribute to the substrate site. Residue Thr212 is the Nucleophile of the active site.

The protein belongs to the ArgJ family. In terms of assembly, heterodimer of an alpha and a beta chain. The alpha and beta chains are autoproteolytically processed from a single precursor protein within the mitochondrion.

It localises to the mitochondrion matrix. It catalyses the reaction N(2)-acetyl-L-ornithine + L-glutamate = N-acetyl-L-glutamate + L-ornithine. It carries out the reaction L-glutamate + acetyl-CoA = N-acetyl-L-glutamate + CoA + H(+). The protein operates within amino-acid biosynthesis; L-arginine biosynthesis; L-ornithine and N-acetyl-L-glutamate from L-glutamate and N(2)-acetyl-L-ornithine (cyclic): step 1/1. Its pathway is amino-acid biosynthesis; L-arginine biosynthesis; N(2)-acetyl-L-ornithine from L-glutamate: step 1/4. Catalyzes two activities which are involved in the cyclic version of arginine biosynthesis: the synthesis of acetylglutamate from glutamate and acetyl-CoA, and of ornithine by transacetylation between acetylornithine and glutamate. The protein is Arginine biosynthesis bifunctional protein ArgJ, mitochondrial (ECM42) of Candida albicans (strain SC5314 / ATCC MYA-2876) (Yeast).